The sequence spans 148 residues: Large ribosomal subunit protein bL9 (148 aa).

Belongs to the bacterial ribosomal protein bL9 family.

In terms of biological role, binds to the 23S rRNA. The protein is Large ribosomal subunit protein bL9 of Azotobacter vinelandii (strain DJ / ATCC BAA-1303).